Reading from the N-terminus, the 253-residue chain is Protein C1orf43 (253 aa).

Residues 11–31 (VNVVLVMAYGSLVFVLLFIFV) form a helical membrane-spanning segment.

The protein localises to the membrane. It localises to the golgi apparatus. The protein resides in the mitochondrion. Functionally, general regulator of phagocytosis. Required to uptake Gram negative bacterium by macrophages. The chain is Protein C1orf43 (C1orf43) from Homo sapiens (Human).